Reading from the N-terminus, the 329-residue chain is MSAYIIETLIKILILVAVFSALGGFATYIERKVLAYFQRRLGPCYVGPFGLLQVAADGIKLFTKEDIIPQGANKFIFTLAPIIAMVSAFVSMAPIPFFPNFTLFGYEIKPLISDINIGFLFFLAVGAAGIYAPILAGLASNNKYSLIGSARATIQLLSFEVVSTLTILAPLMVVGSLSLVEINHYQSGGFLDWLVFKQPLAFVLFLIASYAELNRTPFDLLEHEAEIVAGYCTEYSGLKWGMFFLAEYAHLFAFSFVISIVFFGGFNAWGFIPGGLAILIKAGFFVFLSMWVRATYPHVRPDQLMDMCWKIMLPLALLNIVLTGIIILI.

The next 9 membrane-spanning stretches (helical) occupy residues 9–29, 42–62, 75–95, 117–137, 154–174, 188–208, 238–258, 260–280, and 309–329; these read LIKI…ATYI, GPCY…IKLF, FIFT…MAPI, IGFL…ILAG, IQLL…LMVV, GGFL…FLIA, LKWG…SFVI, IVFF…AILI, and WKIM…IILI.

The protein belongs to the complex I subunit 1 family. In terms of assembly, NDH-1 is composed of 14 different subunits. Subunits NuoA, H, J, K, L, M, N constitute the membrane sector of the complex.

The protein resides in the cell inner membrane. The catalysed reaction is a quinone + NADH + 5 H(+)(in) = a quinol + NAD(+) + 4 H(+)(out). Functionally, NDH-1 shuttles electrons from NADH, via FMN and iron-sulfur (Fe-S) centers, to quinones in the respiratory chain. The immediate electron acceptor for the enzyme in this species is believed to be ubiquinone. Couples the redox reaction to proton translocation (for every two electrons transferred, four hydrogen ions are translocated across the cytoplasmic membrane), and thus conserves the redox energy in a proton gradient. This subunit may bind ubiquinone. This Helicobacter pylori (strain G27) protein is NADH-quinone oxidoreductase subunit H.